The chain runs to 369 residues: Porphobilinogen deaminase, chloroplastic (369 aa).

The transit peptide at 1–46 directs the protein to the chloroplast; that stretch reads MEMTLYSSSSFSLPSAPSNPSLSLFTSSFRFSSFKTSPFSKCRIRA. At cysteine 303 the chain carries S-(dipyrrolylmethanemethyl)cysteine.

This sequence belongs to the HMBS family. Dipyrromethane is required as a cofactor.

The protein resides in the plastid. It localises to the chloroplast. It carries out the reaction 4 porphobilinogen + H2O = hydroxymethylbilane + 4 NH4(+). It participates in porphyrin-containing compound metabolism; protoporphyrin-IX biosynthesis; coproporphyrinogen-III from 5-aminolevulinate: step 2/4. Its pathway is porphyrin-containing compound metabolism; chlorophyll biosynthesis. Its function is as follows. Tetrapolymerization of the monopyrrole PBG into the hydroxymethylbilane pre-uroporphyrinogen in several discrete steps. This Pisum sativum (Garden pea) protein is Porphobilinogen deaminase, chloroplastic (HEMC).